The chain runs to 328 residues: Malate dehydrogenase (328 aa).

Residue 12–18 (GAAGQIG) coordinates NAD(+). Positions 93 and 99 each coordinate substrate. Residues asparagine 106, glutamine 113, and 130 to 132 (TGN) contribute to the NAD(+) site. Residues asparagine 132 and arginine 163 each contribute to the substrate site. Histidine 188 serves as the catalytic Proton acceptor.

The protein belongs to the LDH/MDH superfamily. MDH type 2 family.

It catalyses the reaction (S)-malate + NAD(+) = oxaloacetate + NADH + H(+). In terms of biological role, catalyzes the reversible oxidation of malate to oxaloacetate. This is Malate dehydrogenase from Kocuria rhizophila (strain ATCC 9341 / DSM 348 / NBRC 103217 / DC2201).